A 511-amino-acid chain; its full sequence is 2-isopropylmalate synthase (511 aa).

A Pyruvate carboxyltransferase domain is found at 5–267; sequence IQIFDTTLRD…ESQINLEETK (263 aa). Positions 14, 202, 204, and 238 each coordinate Mn(2+). The segment at 391 to 511 is regulatory domain; sequence QLDNLQLQYV…EYELKEGIRT (121 aa).

It belongs to the alpha-IPM synthase/homocitrate synthase family. LeuA type 1 subfamily. As to quaternary structure, homodimer. Mn(2+) serves as cofactor.

The protein resides in the cytoplasm. The enzyme catalyses 3-methyl-2-oxobutanoate + acetyl-CoA + H2O = (2S)-2-isopropylmalate + CoA + H(+). Its pathway is amino-acid biosynthesis; L-leucine biosynthesis; L-leucine from 3-methyl-2-oxobutanoate: step 1/4. Its function is as follows. Catalyzes the condensation of the acetyl group of acetyl-CoA with 3-methyl-2-oxobutanoate (2-ketoisovalerate) to form 3-carboxy-3-hydroxy-4-methylpentanoate (2-isopropylmalate). In Staphylococcus epidermidis (strain ATCC 35984 / DSM 28319 / BCRC 17069 / CCUG 31568 / BM 3577 / RP62A), this protein is 2-isopropylmalate synthase.